Here is an 869-residue protein sequence, read N- to C-terminus: H(+)/Cl(-) exchange transporter 6 (869 aa).

The Cytoplasmic segment spans residues 1–80 (MAGCRGSLCC…KKGRWYEVVK (80 aa)). The next 2 membrane-spanning stretches (helical) occupy residues 81–113 (WTVVFAIGVCTGLVGLFVDFFVQLFTQLKFGVV) and 128–150 (LSLLELLGFNLTFVFLASLLVLI). A Selectivity filter part_1 motif is present at residues 156–160 (GSGIP). Ser157 contacts chloride. The helical intramembrane region spans 159–166 (IPEIKCYL). The next 2 membrane-spanning stretches (helical) occupy residues 176 to 194 (RLRTLLCKVFGVLFSVAGG) and 200 to 217 (EGPMIHSGAVVGAGLPQF). The Selectivity filter part_2 signature appears at 198–202 (GKEGP). 2 consecutive intramembrane regions (helical) follow at residues 241-253 (FVSAGAAAGIAAA) and 257-265 (PIGATLFSL). 3 consecutive transmembrane segments (helical) span residues 277-294 (TWKVLFCSMSATFTLNFF), 335-364 (GFFVVMGVIGGLLGATFNCLNKRLAKYRMR), and 371-392 (KLVRVLESLLVSLVTTLVVFVA). N-linked (GlcNAc...) asparagine glycosylation is found at Asn410, Asn422, and Asn432. Helical transmembrane passes span 462 to 481 (PITLALFFVLYFLLACWTYG) and 487 to 511 (GLFVPSLLCGAAFGRLVANVLKSYI). Residues 487 to 491 (GLFVP) carry the Selectivity filter part_3 motif. Phe489 serves as a coordination point for chloride. The helical intramembrane region spans 519 to 533 (GTFSLIGAAALLGGV). Residues 534–536 (VRM) constitute an intramembrane region (note=Loop between two helices). Residues 537–548 (TISLTVILIEST) constitute an intramembrane region (helical). The note=Loop between two helices intramembrane region spans 549–552 (NEIT). Residues 553–571 (YGLPIMITLMVAKWTGDFF) form a helical membrane-spanning segment. Topologically, residues 572–869 (NKGIYDIHVG…ARLRQHYQTI (298 aa)) are cytoplasmic. Position 576 (Tyr576) interacts with chloride. Residues 605–662 (MEPNLTYVYPHTRIQSLVSILRTTVHHAFPVVTENRGNEKEFMKGNQLISNNIKFKKS) enclose the CBS 1 domain. 630–632 (HHA) is an ATP binding site. The segment at 668-687 (AGEQRRRSQSMKSYPSSELR) is disordered. Over residues 677–686 (SMKSYPSSEL) the composition is skewed to polar residues. Ser773 bears the Phosphoserine mark. The 62-residue stretch at 807–868 (MNPSPFTVSP…QARLRQHYQT (62 aa)) folds into the CBS 2 domain. 849 to 852 (TRHN) is an ATP binding site.

The protein belongs to the chloride channel (TC 2.A.49) family. ClC-6/CLCN6 subfamily. N-glycosylated on several asparagine residues.

It is found in the late endosome membrane. The enzyme catalyses 2 chloride(in) + H(+)(out) = 2 chloride(out) + H(+)(in). Voltage-gated channel mediating the exchange of chloride ions against protons. Functions as antiporter and contributes to the acidification of the late endosome lumen. The CLC channel family contains both chloride channels and proton-coupled anion transporters that exchange chloride or another anion for protons. The presence of conserved gating glutamate residues is typical for family members that function as antiporters. This is H(+)/Cl(-) exchange transporter 6 (CLCN6) from Oryctolagus cuniculus (Rabbit).